The sequence spans 363 residues: Adenosine deaminase (363 aa).

Residues histidine 42 and histidine 44 each contribute to the Zn(2+) site. A purine D-ribonucleoside-binding positions include 44–46, aspartate 172, and glycine 201; that span reads HLD. Residues 170–184 are gating helix loop; regulates binding affinity for substrates and thus substrate selectivity; sequence IGDTGHRAADIKASA. Histidine 226 provides a ligand contact to Zn(2+). Residues glutamate 229, histidine 253, and aspartate 310 each coordinate a purine D-ribonucleoside. Aspartate 310 contributes to the Zn(2+) binding site.

The protein belongs to the metallo-dependent hydrolases superfamily. Adenosine and AMP deaminases family. It depends on Zn(2+) as a cofactor.

The catalysed reaction is adenosine + H2O + H(+) = inosine + NH4(+). The enzyme catalyses S-methyl-5'-thioadenosine + H2O + H(+) = S-methyl-5'-thioinosine + NH4(+). Its pathway is purine metabolism; purine nucleoside salvage. Its activity is regulated as follows. Inhibited by coformycin and methylthiocoformycin (MT-coformycin). Functionally, catalyzes the hydrolytic deamination of adenosine to produce inosine. Unlike mammalian adenosine deaminases, also catalyzes the deamination of 5'-methylthioadenosine (MTA), a by-product of polyamine biosynthesis, to produce 5'-methylthioinosine (MTI). Plays an essential role in the purine salvage pathway which allows the parasite to use host cell purines for the synthesis of nucleic acids. This is Adenosine deaminase from Plasmodium knowlesi.